Consider the following 374-residue polypeptide: Carbamoyl phosphate synthase small chain (374 aa).

The interval 1–186 is CPSase; the sequence is MTEHAILVLE…DRNECKRAAP (186 aa). The L-glutamine site is built by Ser-47, Gly-237, and Gly-239. The 186-residue stretch at 189 to 374 folds into the Glutamine amidotransferase type-1 domain; that stretch reads KVVAYDYGVK…RFITMMAAQS (186 aa). Catalysis depends on Cys-265, which acts as the Nucleophile. Positions 266, 269, 307, 309, and 310 each coordinate L-glutamine. Active-site residues include His-349 and Glu-351.

Belongs to the CarA family. Composed of two chains; the small (or glutamine) chain promotes the hydrolysis of glutamine to ammonia, which is used by the large (or ammonia) chain to synthesize carbamoyl phosphate. Tetramer of heterodimers (alpha,beta)4.

The enzyme catalyses hydrogencarbonate + L-glutamine + 2 ATP + H2O = carbamoyl phosphate + L-glutamate + 2 ADP + phosphate + 2 H(+). It carries out the reaction L-glutamine + H2O = L-glutamate + NH4(+). It functions in the pathway amino-acid biosynthesis; L-arginine biosynthesis; carbamoyl phosphate from bicarbonate: step 1/1. The protein operates within pyrimidine metabolism; UMP biosynthesis via de novo pathway; (S)-dihydroorotate from bicarbonate: step 1/3. In terms of biological role, small subunit of the glutamine-dependent carbamoyl phosphate synthetase (CPSase). CPSase catalyzes the formation of carbamoyl phosphate from the ammonia moiety of glutamine, carbonate, and phosphate donated by ATP, constituting the first step of 2 biosynthetic pathways, one leading to arginine and/or urea and the other to pyrimidine nucleotides. The small subunit (glutamine amidotransferase) binds and cleaves glutamine to supply the large subunit with the substrate ammonia. This chain is Carbamoyl phosphate synthase small chain, found in Xylella fastidiosa (strain Temecula1 / ATCC 700964).